The primary structure comprises 507 residues: Microcystinase C (507 aa).

Positions 1 to 21 (MLDRRTLMGGILSMAGSKATG) are cleaved as a signal peptide. Aspartate 167, histidine 169, and histidine 191 together coordinate Zn(2+).

Belongs to the peptidase M81 family. Zn(2+) serves as cofactor.

Its activity is regulated as follows. Inhibited by the metal chelators EDTA and 1,10-phenanthroline. Its function is as follows. Involved in peptidolytic degradation of cyclic heptapeptide hepatotoxin microcystin (MC). Cleaves both linear MC and the tetrapeptide degradation product of MC. Cleaves the Adda-Glu peptide bond of linear MC heptapeptides. The protein is Microcystinase C of Sphingomonas sp.